A 164-amino-acid polypeptide reads, in one-letter code: CDP-archaeol synthase (164 aa).

Transmembrane regions (helical) follow at residues 3–23, 55–75, 77–97, and 122–142; these read LTVF…AVFA, AIGI…YHVI, VFDA…GAFI, and FLVY…AVVI.

The protein belongs to the CDP-archaeol synthase family. Mg(2+) serves as cofactor.

The protein resides in the cell membrane. The catalysed reaction is 2,3-bis-O-(geranylgeranyl)-sn-glycerol 1-phosphate + CTP + H(+) = CDP-2,3-bis-O-(geranylgeranyl)-sn-glycerol + diphosphate. It functions in the pathway membrane lipid metabolism; glycerophospholipid metabolism. In terms of biological role, catalyzes the formation of CDP-2,3-bis-(O-geranylgeranyl)-sn-glycerol (CDP-archaeol) from 2,3-bis-(O-geranylgeranyl)-sn-glycerol 1-phosphate (DGGGP) and CTP. This reaction is the third ether-bond-formation step in the biosynthesis of archaeal membrane lipids. This chain is CDP-archaeol synthase, found in Pyrobaculum aerophilum (strain ATCC 51768 / DSM 7523 / JCM 9630 / CIP 104966 / NBRC 100827 / IM2).